The chain runs to 485 residues: tRNA sulfurtransferase (485 aa).

The region spanning 63 to 167 is the THUMP domain; it reads DKLVERLSCM…NELLYLVTAI (105 aa). ATP-binding positions include 185–186, lysine 267, glycine 289, and glutamine 298; that span reads LI. A disulfide bond links cysteine 346 and cysteine 458. The Rhodanese domain occupies 406 to 485; sequence LAENEVILDI…FNNIKVYRQN (80 aa). Cysteine 458 (cysteine persulfide intermediate) is an active-site residue.

This sequence belongs to the ThiI family.

The protein resides in the cytoplasm. The enzyme catalyses [ThiI sulfur-carrier protein]-S-sulfanyl-L-cysteine + a uridine in tRNA + 2 reduced [2Fe-2S]-[ferredoxin] + ATP + H(+) = [ThiI sulfur-carrier protein]-L-cysteine + a 4-thiouridine in tRNA + 2 oxidized [2Fe-2S]-[ferredoxin] + AMP + diphosphate. It catalyses the reaction [ThiS sulfur-carrier protein]-C-terminal Gly-Gly-AMP + S-sulfanyl-L-cysteinyl-[cysteine desulfurase] + AH2 = [ThiS sulfur-carrier protein]-C-terminal-Gly-aminoethanethioate + L-cysteinyl-[cysteine desulfurase] + A + AMP + 2 H(+). It participates in cofactor biosynthesis; thiamine diphosphate biosynthesis. Its function is as follows. Catalyzes the ATP-dependent transfer of a sulfur to tRNA to produce 4-thiouridine in position 8 of tRNAs, which functions as a near-UV photosensor. Also catalyzes the transfer of sulfur to the sulfur carrier protein ThiS, forming ThiS-thiocarboxylate. This is a step in the synthesis of thiazole, in the thiamine biosynthesis pathway. The sulfur is donated as persulfide by IscS. This Tolumonas auensis (strain DSM 9187 / NBRC 110442 / TA 4) protein is tRNA sulfurtransferase.